Here is a 194-residue protein sequence, read N- to C-terminus: A-type ATP synthase subunit E (194 aa).

Belongs to the V-ATPase E subunit family. In terms of assembly, has multiple subunits with at least A(3), B(3), C, D, E, F, H, I and proteolipid K(x).

It is found in the cell membrane. Its function is as follows. Component of the A-type ATP synthase that produces ATP from ADP in the presence of a proton gradient across the membrane. The protein is A-type ATP synthase subunit E of Saccharolobus islandicus (strain M.16.27) (Sulfolobus islandicus).